The primary structure comprises 301 residues: Probable alpha-L-glutamate ligase 1 (301 aa).

The ATP-grasp domain maps to 104–287; that stretch reads LQLLSRKNIG…VAEKIIQFIE (184 aa). ATP is bound by residues K141, 178–179, D187, and 211–213; these read EY and RSN. Residues D248, E260, and N262 each coordinate Mg(2+). Residues D248, E260, and N262 each coordinate Mn(2+).

The protein belongs to the RimK family. It depends on Mg(2+) as a cofactor. The cofactor is Mn(2+).

This chain is Probable alpha-L-glutamate ligase 1, found in Shewanella frigidimarina (strain NCIMB 400).